We begin with the raw amino-acid sequence, 388 residues long: MRYLTSGESHGPQLTVIVEGIPANLEIKVEDINKEMFKRQGGYGRGRRMQIEKDTVEIVSGVRNGYTLGSPITMVVTNDDFTHWRKIMGAAPISEEERENMKRTITKPRPGHADLVGGMKYNHRDLRNVLERSSARETAARVAVGALCKVLLQQLDIDIYSRVVEIGGIKDKDFYDSETFKANLDRNDVRVIDDSIAQAMRDKIDEAKNEGDSIGGVVQVVVENMPVGVGSYVHYDRKLDGKIAQGVVSINAFKGVSFGEGFKAAEKPGSEIQDEILYNSEIGYYRGSNHLGGLEGGMSNGMPIIVNGVMKPIPTLYKPLNSVDINTKEDFKATIERSDSCAVPAASIVCEHVVAFEIAKALLEEFQSNHIEQLQQQIADRRQLNVEF.

Residues R39 and R45 each coordinate NADP(+). FMN contacts are provided by residues R132–S134, N251–A252, G296, K311–T315, and R337.

It belongs to the chorismate synthase family. Homotetramer. Requires FMNH2 as cofactor.

The enzyme catalyses 5-O-(1-carboxyvinyl)-3-phosphoshikimate = chorismate + phosphate. Its pathway is metabolic intermediate biosynthesis; chorismate biosynthesis; chorismate from D-erythrose 4-phosphate and phosphoenolpyruvate: step 7/7. In terms of biological role, catalyzes the anti-1,4-elimination of the C-3 phosphate and the C-6 proR hydrogen from 5-enolpyruvylshikimate-3-phosphate (EPSP) to yield chorismate, which is the branch point compound that serves as the starting substrate for the three terminal pathways of aromatic amino acid biosynthesis. This reaction introduces a second double bond into the aromatic ring system. This chain is Chorismate synthase, found in Staphylococcus aureus (strain Mu50 / ATCC 700699).